Reading from the N-terminus, the 1020-residue chain is Neurofilament heavy polypeptide (1020 aa).

Positions 1–100 (MMSFGGADAL…VATSRSEKEQ (100 aa)) are head. Positions 58–83 (VSASPSRFRGAGAASSTDSLDTLSNG) are disordered. A compositionally biased stretch (polar residues) spans 71–82 (ASSTDSLDTLSN). A phosphoserine mark is found at S76 and S124. The 317-residue stretch at 97–413 (EKEQLQALND…KLLEGEECRI (317 aa)) folds into the IF rod domain. A coil 1A region spans residues 101–132 (LQALNDRFAGYIDKVRQLEAHNRSLEGEAAAL). Positions 133 to 145 (RQQQAGRSAMGEL) are linker 1. Residues 146–244 (YEREVREMRG…QEEVGELLGQ (99 aa)) form a coil 1B region. The linker 12 stretch occupies residues 245–266 (IQGSGAAQAQMQAETRDALKCD). The tract at residues 267–288 (VTSALREIRAQLEGHAVQSTLQ) is coil 2A. Residues 289 to 292 (SEEW) are linker 2. The segment at 293–413 (FRVRLDRLSE…KLLEGEECRI (121 aa)) is coil 2B. S347 and S421 each carry phosphoserine. Residues 414–1020 (GFGPIPFSLP…ATEDKAAKGK (607 aa)) form a tail region. Positions 456–1020 (IVEEQTEETQ…ATEDKAAKGK (565 aa)) are disordered. Composition is skewed to acidic residues over residues 459 to 475 (EQTEETQVTEEVTEEEE) and 483 to 498 (GKEEEGGEEEEAEGGE). S511, S526, S532, S540, S546, S552, S560, S566, S574, S580, S586, S594, S600, S606, S614, S620, S628, S634, S640, S648, S654, S662, S668, S676, S682, S690, S696, and S704 each carry phosphoserine. Over residues 511–1020 (SPEKEAKSPV…ATEDKAAKGK (510 aa)) the composition is skewed to basic and acidic residues. 4 repeat units span residues 525–530 (KSPAEA), 531–536 (KSPEKE), 539–544 (KSPAEV), and 545–550 (KSPEKA). Residues 525 to 826 (KSPAEAKSPE…KEEVKSPVKE (302 aa)) form a 30 X 6 AA repeats of K-S-P-[AEPV]-[EAK]-[AEVK] region. The stretch at 559-564 (KSPPEA) is repeat 5. 2 consecutive repeat copies span residues 573–578 (KSPAEV) and 579–584 (KSPEKA). 2 consecutive repeat copies span residues 593–598 (KSPAEA) and 599–604 (KSPEKA). Repeat unit 10 spans residues 613–618 (KSPAEA). Tandem repeats lie at residues 627 to 632 (KSPAEV), 633 to 638 (KSPEKA), 639 to 644 (KSPTKE), and 647 to 652 (KSPEKA). Repeat copies occupy residues 661 to 666 (KSPEKA), 667 to 672 (KSPVKA), 675 to 680 (KSPEKA), 681 to 686 (KSPVKA), 689 to 694 (KSPEKA), 695 to 700 (KSPVKE), 703 to 708 (KSPEKA), 709 to 714 (KSPVKE), 717 to 722 (KSPEKA), 723 to 728 (KSPVKE), 737 to 742 (KSPVKE), and 745 to 750 (KSPEKA). A phosphoserine mark is found at S718, S724, and S738. Residues S752 and S763 each carry the phosphoserine modification. The stretch at 762–767 (KSPEAK) is repeat 27. T768 bears the Phosphothreonine mark. Repeat copies occupy residues 786-791 (KSPVKE), 794-799 (KSPEKA), and 821-826 (KSPVKE). Residues S787, S795, S822, and S888 each carry the phosphoserine modification.

It belongs to the intermediate filament family. Forms heterodimers with NEFL; which can further hetero-oligomerize (in vitro). Forms heterodimers with INA (in vitro). Post-translationally, there are a number of repeats of the tripeptide K-S-P, NFH is phosphorylated on a number of the serines in this motif. It is thought that phosphorylation of NFH results in the formation of interfilament cross bridges that are important in the maintenance of axonal caliber. Phosphorylation seems to play a major role in the functioning of the larger neurofilament polypeptides (NF-M and NF-H), the levels of phosphorylation being altered developmentally and coincidentally with a change in the neurofilament function. In terms of processing, phosphorylated in the head and rod regions by the PKC kinase PKN1, leading to the inhibition of polymerization.

It localises to the cytoplasm. Its subcellular location is the cytoskeleton. It is found in the cell projection. The protein resides in the axon. In terms of biological role, neurofilaments usually contain three intermediate filament proteins: NEFL, NEFM, and NEFH which are involved in the maintenance of neuronal caliber. NEFH has an important function in mature axons that is not subserved by the two smaller NF proteins. May additionally cooperate with the neuronal intermediate filament proteins PRPH and INA to form neuronal filamentous networks. This is Neurofilament heavy polypeptide (NEFH) from Homo sapiens (Human).